A 370-amino-acid chain; its full sequence is Proline-rich protein 5-like (370 aa).

Serine 28 bears the Phosphoserine mark. Disordered regions lie at residues 312 to 346 and 351 to 370; these read LGEEAGGEDKHLLLPPSFPPPHRQCSSEPSILDSP and LEDVASGSQEDSELNCASLS.

It belongs to the PROTOR family. In terms of assembly, interacts with the mammalian target of rapamycin complex 2 (mTORC2) which contains MTOR, MLST8, PRR5, RICTOR, MAPKAP1 and DEPTOR. Interacts with RFFL. Interacts (via C-terminus) with ZFP36 (via C-terminus); this interaction may accelerate ZFP36-mediated mRNA decay during stress. Interacts with RICTOR. Post-translationally, ubiquitinated. Ubiquitination by RFFL promotes proteasomal degradation of PRR5L thereby modifying the substrate-specific activity of the mTORC2 complex. Ubiquitination by RFFL is stimulated by LPA/lysophosphatidic acid.

Associates with the mTORC2 complex that regulates cellular processes including survival and organization of the cytoskeleton. Regulates the activity of the mTORC2 complex in a substrate-specific manner preventing for instance the specific phosphorylation of PKCs and thereby controlling cell migration. Plays a role in the stimulation of ZFP36-mediated mRNA decay of several ZFP36-associated mRNAs, such as TNF-alpha and GM-CSF, in response to stress. Required for ZFP36 localization to cytoplasmic stress granule (SG) and P-body (PB) in response to stress. The sequence is that of Proline-rich protein 5-like (Prr5l) from Mus musculus (Mouse).